The chain runs to 158 residues: NADH-quinone oxidoreductase subunit B (158 aa).

Positions 37, 38, 102, and 132 each coordinate [4Fe-4S] cluster.

This sequence belongs to the complex I 20 kDa subunit family. NDH-1 is composed of 14 different subunits. Subunits NuoB, C, D, E, F, and G constitute the peripheral sector of the complex. [4Fe-4S] cluster serves as cofactor.

The protein localises to the cell inner membrane. The enzyme catalyses a quinone + NADH + 5 H(+)(in) = a quinol + NAD(+) + 4 H(+)(out). Functionally, NDH-1 shuttles electrons from NADH, via FMN and iron-sulfur (Fe-S) centers, to quinones in the respiratory chain. The immediate electron acceptor for the enzyme in this species is believed to be ubiquinone. Couples the redox reaction to proton translocation (for every two electrons transferred, four hydrogen ions are translocated across the cytoplasmic membrane), and thus conserves the redox energy in a proton gradient. This chain is NADH-quinone oxidoreductase subunit B, found in Acidithiobacillus ferrooxidans (strain ATCC 23270 / DSM 14882 / CIP 104768 / NCIMB 8455) (Ferrobacillus ferrooxidans (strain ATCC 23270)).